Reading from the N-terminus, the 407-residue chain is Serine hydroxymethyltransferase (407 aa).

Residues leucine 120 and 124–126 contribute to the (6S)-5,6,7,8-tetrahydrofolate site; that span reads GHL. Residue lysine 229 is modified to N6-(pyridoxal phosphate)lysine.

Belongs to the SHMT family. As to quaternary structure, homodimer. Pyridoxal 5'-phosphate serves as cofactor.

The protein resides in the cytoplasm. It carries out the reaction (6R)-5,10-methylene-5,6,7,8-tetrahydrofolate + glycine + H2O = (6S)-5,6,7,8-tetrahydrofolate + L-serine. The protein operates within one-carbon metabolism; tetrahydrofolate interconversion. It participates in amino-acid biosynthesis; glycine biosynthesis; glycine from L-serine: step 1/1. Functionally, catalyzes the reversible interconversion of serine and glycine with tetrahydrofolate (THF) serving as the one-carbon carrier. This reaction serves as the major source of one-carbon groups required for the biosynthesis of purines, thymidylate, methionine, and other important biomolecules. Also exhibits THF-independent aldolase activity toward beta-hydroxyamino acids, producing glycine and aldehydes, via a retro-aldol mechanism. This chain is Serine hydroxymethyltransferase, found in Deinococcus deserti (strain DSM 17065 / CIP 109153 / LMG 22923 / VCD115).